We begin with the raw amino-acid sequence, 351 residues long: Holliday junction branch migration complex subunit RuvB (351 aa).

The span at 1-12 (MGRFEDDAEVED) shows a compositional bias: acidic residues. The interval 1-23 (MGRFEDDAEVEDREVSPALTVGE) is disordered. Positions 1–191 (MGRFEDDAEV…FGFTAHMDFY (191 aa)) are large ATPase domain (RuvB-L). ATP-binding positions include Leu30, Arg31, Gly72, Lys75, Thr76, Ser77, 138-140 (EDF), Arg181, Tyr191, and Arg228. Residue Thr76 participates in Mg(2+) binding. Residues 192–262 (EPVELERVLA…IAKSALEVYD (71 aa)) form a small ATPAse domain (RuvB-S) region. Residues 265-351 (ELGLDRLDRA…TGIGQAGLFD (87 aa)) form a head domain (RuvB-H) region. Arg320 and Arg325 together coordinate DNA.

Belongs to the RuvB family. In terms of assembly, homohexamer. Forms an RuvA(8)-RuvB(12)-Holliday junction (HJ) complex. HJ DNA is sandwiched between 2 RuvA tetramers; dsDNA enters through RuvA and exits via RuvB. An RuvB hexamer assembles on each DNA strand where it exits the tetramer. Each RuvB hexamer is contacted by two RuvA subunits (via domain III) on 2 adjacent RuvB subunits; this complex drives branch migration. In the full resolvosome a probable DNA-RuvA(4)-RuvB(12)-RuvC(2) complex forms which resolves the HJ.

It localises to the cytoplasm. It carries out the reaction ATP + H2O = ADP + phosphate + H(+). In terms of biological role, the RuvA-RuvB-RuvC complex processes Holliday junction (HJ) DNA during genetic recombination and DNA repair, while the RuvA-RuvB complex plays an important role in the rescue of blocked DNA replication forks via replication fork reversal (RFR). RuvA specifically binds to HJ cruciform DNA, conferring on it an open structure. The RuvB hexamer acts as an ATP-dependent pump, pulling dsDNA into and through the RuvAB complex. RuvB forms 2 homohexamers on either side of HJ DNA bound by 1 or 2 RuvA tetramers; 4 subunits per hexamer contact DNA at a time. Coordinated motions by a converter formed by DNA-disengaged RuvB subunits stimulates ATP hydrolysis and nucleotide exchange. Immobilization of the converter enables RuvB to convert the ATP-contained energy into a lever motion, pulling 2 nucleotides of DNA out of the RuvA tetramer per ATP hydrolyzed, thus driving DNA branch migration. The RuvB motors rotate together with the DNA substrate, which together with the progressing nucleotide cycle form the mechanistic basis for DNA recombination by continuous HJ branch migration. Branch migration allows RuvC to scan DNA until it finds its consensus sequence, where it cleaves and resolves cruciform DNA. The protein is Holliday junction branch migration complex subunit RuvB of Mycolicibacterium smegmatis (strain ATCC 700084 / mc(2)155) (Mycobacterium smegmatis).